The chain runs to 415 residues: Histone acetyltransferase type B subunit 2 (415 aa).

WD repeat units follow at residues 118 to 158 (ENNF…KTAI), 163 to 203 (PHED…ATDL), 211 to 251 (THKD…EPVS), 256 to 296 (PESE…TKSA), and 307 to 347 (GHSD…EEQA). Residues 349–353 (EDAED) are interaction with the histone H4 N-terminus. The stretch at 364-404 (GHTGAVTDLSWCPYKDWTIGSVADDNIVHLWEIGKTLLNAE) is one WD 6 repeat.

The protein belongs to the WD repeat RBAP46/RBAP48/MSI1 family. In terms of assembly, component of the HAT-B complex composed of at least HAT1 and HAT2. The HAT-B complex binds to histone H4 tail.

The protein resides in the cytoplasm. It is found in the nucleus. In terms of biological role, regulatory subunit of the histone acetylase B (HAT-B) complex. The complex acetylates 'Lys-12' of histone H4 which is required for telomeric silencing. The protein is Histone acetyltransferase type B subunit 2 (HAT2) of Debaryomyces hansenii (strain ATCC 36239 / CBS 767 / BCRC 21394 / JCM 1990 / NBRC 0083 / IGC 2968) (Yeast).